We begin with the raw amino-acid sequence, 254 residues long: Large ribosomal subunit protein uL2 (254 aa).

It belongs to the universal ribosomal protein uL2 family.

The polypeptide is Large ribosomal subunit protein uL2 (RPL2) (Eremothecium gossypii (strain ATCC 10895 / CBS 109.51 / FGSC 9923 / NRRL Y-1056) (Yeast)).